Here is a 569-residue protein sequence, read N- to C-terminus: Toxin YxiD (569 aa).

The region spanning 1-235 (MKTLDVHALH…NPQMKQADDS (235 aa)) is the LXG domain. The stretch at 8 to 91 (ALHEGIQHTI…QHAISSVESN (84 aa)) forms a coiled coil. Residues 548–569 (HQAGIHGTGSPANELFKGGKKK) are disordered.

This sequence in the N-terminal section; belongs to the LXG family. As to quaternary structure, probably interacts with cognate immunity protein YxxD but not with non-cognate immunity proteins. The interaction inhibits the toxic activity of YxxD.

It localises to the secreted. Toxic component of one of 6 LXG toxin-immunity modules in this strain. They promote kin selection, mediate competition in biofilms, and drive spatial segregation of different strains, indicating that LXG toxins may help avoid warfare between strains in biofilms. Mediates intercellular competition during biofilm formation; disruption of the operon disadvantages the bacteria, but overexpression of the cognate immunity protein restores growth in competition with wild-type. Overexpression alone in situ causes growth arrest but not cell lysis, a large decrease in chromosomal DNA content and the production of anucleate cells. No effect is seen on rRNA. Co-overexpression with cognate immunity protein YxxD does not cause growth arrest. The toxic effect is not dependent on the epsA and tapA operons which are required for biofilm formation. The polypeptide is Toxin YxiD (yxiD) (Bacillus subtilis (strain 168)).